The chain runs to 433 residues: Phosphomethylpyrimidine synthase (433 aa).

Substrate is bound by residues N69, M98, Y127, H163, 185–187, 226–229, and E265; these read SRG and DALR. H269 serves as a coordination point for Zn(2+). Y292 serves as a coordination point for substrate. A Zn(2+)-binding site is contributed by H333. 3 residues coordinate [4Fe-4S] cluster: C409, C412, and C416.

Belongs to the ThiC family. Requires [4Fe-4S] cluster as cofactor.

The catalysed reaction is 5-amino-1-(5-phospho-beta-D-ribosyl)imidazole + S-adenosyl-L-methionine = 4-amino-2-methyl-5-(phosphooxymethyl)pyrimidine + CO + 5'-deoxyadenosine + formate + L-methionine + 3 H(+). The protein operates within cofactor biosynthesis; thiamine diphosphate biosynthesis. Catalyzes the synthesis of the hydroxymethylpyrimidine phosphate (HMP-P) moiety of thiamine from aminoimidazole ribotide (AIR) in a radical S-adenosyl-L-methionine (SAM)-dependent reaction. The polypeptide is Phosphomethylpyrimidine synthase (Finegoldia magna (strain ATCC 29328 / DSM 20472 / WAL 2508) (Peptostreptococcus magnus)).